A 600-amino-acid polypeptide reads, in one-letter code: ATP-dependent lipid A-core flippase (600 aa).

Helical transmembrane passes span 26–46 (VGIF…QPML), 82–102 (LLIV…NYFL), 167–187 (VFLF…MLAI), and 266–286 (PMLQ…VLFL). The region spanning 30 to 321 (LLSIIGFVIF…LSEVSSTIQK (292 aa)) is the ABC transmembrane type-1 domain. Positions 353 to 589 (LEVKNLSFFY…NGYYARLHAM (237 aa)) constitute an ABC transporter domain. 387–394 (GRSGSGKS) contacts ATP.

This sequence belongs to the ABC transporter superfamily. Lipid exporter (TC 3.A.1.106) family. In terms of assembly, homodimer.

It is found in the cell inner membrane. The enzyme catalyses ATP + H2O + lipid A-core oligosaccharideSide 1 = ADP + phosphate + lipid A-core oligosaccharideSide 2.. Involved in lipopolysaccharide (LPS) biosynthesis. Translocates lipid A-core from the inner to the outer leaflet of the inner membrane. Transmembrane domains (TMD) form a pore in the inner membrane and the ATP-binding domain (NBD) is responsible for energy generation. The chain is ATP-dependent lipid A-core flippase from Pseudomonas syringae pv. syringae (strain B728a).